We begin with the raw amino-acid sequence, 291 residues long: HTH-type transcriptional activator AmpR (291 aa).

The HTH lysR-type domain occupies 6-63; the sequence is LPLNSLRAFEAAARHLSFTHAAIELNVTHSAISQHVKTLEQHLNCQLFVRVSRGLMLT. Residues 23-42 constitute a DNA-binding region (H-T-H motif); the sequence is FTHAAIELNVTHSAISQHVK.

The protein belongs to the LysR transcriptional regulatory family.

The protein localises to the cytoplasm. In terms of biological role, this protein is a positive regulator of gene expression of cephalosporinase (AmpC). This chain is HTH-type transcriptional activator AmpR (ampR), found in Enterobacter cloacae.